Consider the following 244-residue polypeptide: MIKKLKGRQRIQLIACNNINYVYKTEFHLGESAWKWNPTLKSFIYKEISQIHIIRIPAFLLIIGKVLNLIREVMRFRGKVVIVANNLANGKVIERLVKTMRQPALLTKYYAGGLTRKTENLRQYLEADKGLTNLKVRSKYIKQLIGLQDLERKPAYIVILDAIQGKFLINESAILGIPTIGCGDTTINFPKLNYPLIGNFKSREKRGSVLLLIKHAMFEGMRQEATIFAEYYNKYTRMYKSFLK.

Belongs to the universal ribosomal protein uS2 family.

It localises to the mitochondrion. This is Small ribosomal subunit protein uS2m (mrps2) from Dictyostelium discoideum (Social amoeba).